Consider the following 110-residue polypeptide: UPF0122 protein Aflv_1766 (110 aa).

This sequence belongs to the UPF0122 family.

Its function is as follows. Might take part in the signal recognition particle (SRP) pathway. This is inferred from the conservation of its genetic proximity to ftsY/ffh. May be a regulatory protein. The sequence is that of UPF0122 protein Aflv_1766 from Anoxybacillus flavithermus (strain DSM 21510 / WK1).